The chain runs to 291 residues: Release factor glutamine methyltransferase (291 aa).

Residues 127-131 (GTGSG), aspartate 150, tryptophan 179, and asparagine 196 contribute to the S-adenosyl-L-methionine site. A substrate-binding site is contributed by 196-199 (NPPY).

Belongs to the protein N5-glutamine methyltransferase family. PrmC subfamily.

It catalyses the reaction L-glutaminyl-[peptide chain release factor] + S-adenosyl-L-methionine = N(5)-methyl-L-glutaminyl-[peptide chain release factor] + S-adenosyl-L-homocysteine + H(+). Its function is as follows. Methylates the class 1 translation termination release factors RF1/PrfA and RF2/PrfB on the glutamine residue of the universally conserved GGQ motif. The polypeptide is Release factor glutamine methyltransferase (Thermosynechococcus vestitus (strain NIES-2133 / IAM M-273 / BP-1)).